The chain runs to 300 residues: UDP-3-O-acyl-N-acetylglucosamine deacetylase (300 aa).

Zn(2+) contacts are provided by His78, His237, and Asp241. His264 (proton donor) is an active-site residue.

This sequence belongs to the LpxC family. Zn(2+) is required as a cofactor.

The catalysed reaction is a UDP-3-O-[(3R)-3-hydroxyacyl]-N-acetyl-alpha-D-glucosamine + H2O = a UDP-3-O-[(3R)-3-hydroxyacyl]-alpha-D-glucosamine + acetate. It functions in the pathway glycolipid biosynthesis; lipid IV(A) biosynthesis; lipid IV(A) from (3R)-3-hydroxytetradecanoyl-[acyl-carrier-protein] and UDP-N-acetyl-alpha-D-glucosamine: step 2/6. In terms of biological role, catalyzes the hydrolysis of UDP-3-O-myristoyl-N-acetylglucosamine to form UDP-3-O-myristoylglucosamine and acetate, the committed step in lipid A biosynthesis. This Acinetobacter baumannii (strain SDF) protein is UDP-3-O-acyl-N-acetylglucosamine deacetylase.